A 185-amino-acid chain; its full sequence is MIEETLLEAEEKMEKAVVVAKEDFAAIRTGRAHPAMFNKIVADYYGALTPINQLASFSVPEPRMAVVTPFDKSALRNIEQAIRDSDLGVNPSNDGNIIRVVFPELTEERRKDYIKVAKTKGEDAKVSIRSVRRKAKDAIDKLIKDGEVGEDEGRRAEKELDDTTAKYVAQVDELLKHKEAELLEV.

This sequence belongs to the RRF family.

It is found in the cytoplasm. Functionally, responsible for the release of ribosomes from messenger RNA at the termination of protein biosynthesis. May increase the efficiency of translation by recycling ribosomes from one round of translation to another. This chain is Ribosome-recycling factor, found in Streptomyces avermitilis (strain ATCC 31267 / DSM 46492 / JCM 5070 / NBRC 14893 / NCIMB 12804 / NRRL 8165 / MA-4680).